Here is a 185-residue protein sequence, read N- to C-terminus: Ribonuclease HII (185 aa).

The 185-residue stretch at Met-1–Leu-185 folds into the RNase H type-2 domain. Positions 7, 8, and 99 each coordinate a divalent metal cation.

The protein belongs to the RNase HII family. Mn(2+) is required as a cofactor. Mg(2+) serves as cofactor.

It localises to the cytoplasm. The catalysed reaction is Endonucleolytic cleavage to 5'-phosphomonoester.. In terms of biological role, endonuclease that specifically degrades the RNA of RNA-DNA hybrids. This Francisella tularensis subsp. novicida (strain U112) protein is Ribonuclease HII.